The following is a 472-amino-acid chain: Glutamate--tRNA ligase 1 (472 aa).

A 'HIGH' region motif is present at residues 9 to 19 (PSPTGLLHVGN). Positions 112–131 (AMAEKRPPRYDGTWRDRDPS) are enriched in basic and acidic residues. The disordered stretch occupies residues 112–133 (AMAEKRPPRYDGTWRDRDPSEA). Residues 238 to 242 (KLSKR) carry the 'KMSKS' region motif. Lysine 241 serves as a coordination point for ATP.

Belongs to the class-I aminoacyl-tRNA synthetase family. Glutamate--tRNA ligase type 1 subfamily. As to quaternary structure, monomer.

It localises to the cytoplasm. It carries out the reaction tRNA(Glu) + L-glutamate + ATP = L-glutamyl-tRNA(Glu) + AMP + diphosphate. In terms of biological role, catalyzes the attachment of glutamate to tRNA(Glu) in a two-step reaction: glutamate is first activated by ATP to form Glu-AMP and then transferred to the acceptor end of tRNA(Glu). The sequence is that of Glutamate--tRNA ligase 1 from Gluconobacter oxydans (strain 621H) (Gluconobacter suboxydans).